The following is a 312-amino-acid chain: 2-dehydropantoate 2-reductase (312 aa).

NADP(+) is bound by residues 7 to 12 (GAGAMG), asparagine 105, and alanine 131. Asparagine 105 provides a ligand contact to substrate. Residue lysine 187 is the Proton donor of the active site. Asparagine 191, asparagine 195, and serine 260 together coordinate substrate. Glutamate 273 lines the NADP(+) pocket.

The protein belongs to the ketopantoate reductase family.

It localises to the cytoplasm. The catalysed reaction is (R)-pantoate + NADP(+) = 2-dehydropantoate + NADPH + H(+). Its pathway is cofactor biosynthesis; (R)-pantothenate biosynthesis; (R)-pantoate from 3-methyl-2-oxobutanoate: step 2/2. Functionally, catalyzes the NADPH-dependent reduction of ketopantoate into pantoic acid. In Lactococcus lactis subsp. lactis (strain IL1403) (Streptococcus lactis), this protein is 2-dehydropantoate 2-reductase.